Reading from the N-terminus, the 451-residue chain is Chromosomal replication initiator protein DnaA (451 aa).

Positions 1–73 (MQDNLPQIWE…SNALKQTTSK (73 aa)) are domain I, interacts with DnaA modulators. Positions 73 to 113 (KNFEIRFIVPSEEKISKTEESQKKLEGSVNISVASDQFVSN) are domain II. Residues 114–330 (NLNPKYTFDT…GALIRIVAYS (217 aa)) form a domain III, AAA+ region region. ATP-binding residues include G158, G160, K161, and T162. Residues 331–451 (SLTNSEITVE…ERIAKEIKGD (121 aa)) form a domain IV, binds dsDNA region.

It belongs to the DnaA family. Oligomerizes as a right-handed, spiral filament on DNA at oriC.

Its subcellular location is the cytoplasm. Plays an essential role in the initiation and regulation of chromosomal replication. ATP-DnaA binds to the origin of replication (oriC) to initiate formation of the DNA replication initiation complex once per cell cycle. Binds the DnaA box (a 9 base pair repeat at the origin) and separates the double-stranded (ds)DNA. Forms a right-handed helical filament on oriC DNA; dsDNA binds to the exterior of the filament while single-stranded (ss)DNA is stabiized in the filament's interior. The ATP-DnaA-oriC complex binds and stabilizes one strand of the AT-rich DNA unwinding element (DUE), permitting loading of DNA polymerase. After initiation quickly degrades to an ADP-DnaA complex that is not apt for DNA replication. Binds acidic phospholipids. This is Chromosomal replication initiator protein DnaA from Alkaliphilus oremlandii (strain OhILAs) (Clostridium oremlandii (strain OhILAs)).